Reading from the N-terminus, the 225-residue chain is Cytidylate kinase (225 aa).

ATP is bound at residue 11–19 (GPSGAGKGT).

It belongs to the cytidylate kinase family. Type 1 subfamily.

The protein resides in the cytoplasm. The catalysed reaction is CMP + ATP = CDP + ADP. It carries out the reaction dCMP + ATP = dCDP + ADP. The polypeptide is Cytidylate kinase (Mannheimia succiniciproducens (strain KCTC 0769BP / MBEL55E)).